Consider the following 308-residue polypeptide: Porphobilinogen deaminase (308 aa).

C241 carries the S-(dipyrrolylmethanemethyl)cysteine modification.

Belongs to the HMBS family. Monomer. It depends on dipyrromethane as a cofactor.

It catalyses the reaction 4 porphobilinogen + H2O = hydroxymethylbilane + 4 NH4(+). Its pathway is porphyrin-containing compound metabolism; protoporphyrin-IX biosynthesis; coproporphyrinogen-III from 5-aminolevulinate: step 2/4. Its function is as follows. Tetrapolymerization of the monopyrrole PBG into the hydroxymethylbilane pre-uroporphyrinogen in several discrete steps. In Staphylococcus saprophyticus subsp. saprophyticus (strain ATCC 15305 / DSM 20229 / NCIMB 8711 / NCTC 7292 / S-41), this protein is Porphobilinogen deaminase.